The primary structure comprises 328 residues: Ethanol acetyltransferase 1 (328 aa).

The 271-residue stretch at 39–309 folds into the AB hydrolase-1 domain; that stretch reads PAIINIHGLL…TGHNLLLENP (271 aa). Residues S115, D139, and H302 each act as charge relay system in the active site.

The protein belongs to the AB hydrolase superfamily.

The protein resides in the mitochondrion. It catalyses the reaction ethanol + acetyl-CoA = ethyl acetate + CoA. The enzyme catalyses acetyl-CoA + H2O = acetate + CoA + H(+). The catalysed reaction is ethyl acetate + H2O = ethanol + acetate + H(+). Alcohol acetyltransferase that catalyzes the synthesis of ethyl acetate from ethanol and acetyl-CoA. Can also function as a thioesterase by hydrolyzing acetyl-CoA in the absence of ethanol, as well as esterase hydrolyzing ethyl acetate. This is Ethanol acetyltransferase 1 from Saccharomyces cerevisiae (strain ATCC 204508 / S288c) (Baker's yeast).